A 202-amino-acid polypeptide reads, in one-letter code: Histone chaperone ASF1B (202 aa).

Positions 1–155 are interaction with CHAF1B; sequence MAKVSVLNVA…VTRFHINWDN (155 aa). The interaction with histone H3 stretch occupies residues 1–156; sequence MAKVSVLNVA…TRFHINWDNN (156 aa). Phosphoserine; by TLK2 is present on S198.

It belongs to the ASF1 family. Interacts with histone H3 (via C-terminus), including histone H3.1, H3.2 and H3.3, and histone H4; the interaction with H3 is direct. Interacts with the CHAF1A, CHAF1B and RBBP4 subunits of the CAF-1 complex. Interacts with HAT1, NASP and TAF1. Found in a soluble complex with NASP and histones H3 and H4; the interaction with NASP is probably indirect and mediated by H3-H4. Interacts with CDAN1. Found in a cytosolic complex with IPO4 and histones H3 and H4. Interacts with CREBBP. Phosphorylated by TLK1 and TLK2. In terms of tissue distribution, highly expressed in testis and at lower levels in colon, small intestine and thymus.

The protein localises to the nucleus. Its subcellular location is the cytoplasm. It is found in the cytosol. Functionally, histone chaperone that facilitates histone deposition and histone exchange and removal during nucleosome assembly and disassembly. Cooperates with chromatin assembly factor 1 (CAF-1) to promote replication-dependent chromatin assembly. Also involved in the nuclear import of the histone H3-H4 dimer together with importin-4 (IPO4): specifically recognizes and binds newly synthesized histones with the monomethylation of H3 'Lys-9' (H3K9me1) and diacetylation at 'Lys-5' and 'Lys-12' of H4 (H4K5K12ac) marks in the cytosol. Does not participate in replication-independent nucleosome deposition which is mediated by ASF1A and HIRA. Required for gonad development. The polypeptide is Histone chaperone ASF1B (Homo sapiens (Human)).